The primary structure comprises 459 residues: Vanillin aminotransferase (459 aa).

Residues 115–116 and Asp255 contribute to the pyridoxal 5'-phosphate site; that span reads GS. The residue at position 284 (Lys284) is an N6-(pyridoxal phosphate)lysine. 320-321 provides a ligand contact to pyridoxal 5'-phosphate; it reads FT. Residues 428 to 459 adopt a coiled-coil conformation; it reads LSLEELDELIRIYGKALKDTEKRVEELKSQKK.

Belongs to the class-III pyridoxal-phosphate-dependent aminotransferase family. In terms of tissue distribution, expressed in placental tissue of immature fruit.

The enzyme catalyses vanillin + L-alanine = vanillylamine + pyruvate. The protein operates within aromatic compound metabolism; phenylpropanoid biosynthesis. Involved in the biosynthesis of capsaicinoids natural products, pungent alkaloids synthesized from phenylpropanoid intermediates in the placental tissue of chili pepper fruit acting as repellant on herbivorous mammals and conferring spiciness to hot peppers. Can transfer an amine from vanillylamine to pyruvate forming vanillin and L-alanine. Can use pyruvate or oxaloacetate, but not 2-oxoglutarate as amino group acceptors. Is able to convert (S)-1-phenylethylamine into acetophenone in vitro. The chain is Vanillin aminotransferase from Capsicum chinense (Scotch bonnet).